We begin with the raw amino-acid sequence, 139 residues long: MLIPKRTKYRKQHRPVRRGMSKGGNEIAFGDFGIQALAPAYVTNRQIEAARIAMTRYIKRGGRVWITIFPDRPLTKKPLGTRMGSGKGTPEFWIANVHPGRVMFEIGGVSEDVAREALRRAIDKLPMKCRVIAREGGDI.

A compositionally biased stretch (basic residues) spans 1–20 (MLIPKRTKYRKQHRPVRRGM). The interval 1–21 (MLIPKRTKYRKQHRPVRRGMS) is disordered.

Belongs to the universal ribosomal protein uL16 family. As to quaternary structure, part of the 50S ribosomal subunit.

Its function is as follows. Binds 23S rRNA and is also seen to make contacts with the A and possibly P site tRNAs. This is Large ribosomal subunit protein uL16 from Bifidobacterium adolescentis (strain ATCC 15703 / DSM 20083 / NCTC 11814 / E194a).